The following is a 435-amino-acid chain: Probable glycine dehydrogenase (decarboxylating) subunit 1 (435 aa).

The protein belongs to the GcvP family. N-terminal subunit subfamily. The glycine cleavage system is composed of four proteins: P, T, L and H. In this organism, the P 'protein' is a heterodimer of two subunits.

It catalyses the reaction N(6)-[(R)-lipoyl]-L-lysyl-[glycine-cleavage complex H protein] + glycine + H(+) = N(6)-[(R)-S(8)-aminomethyldihydrolipoyl]-L-lysyl-[glycine-cleavage complex H protein] + CO2. Its function is as follows. The glycine cleavage system catalyzes the degradation of glycine. The P protein binds the alpha-amino group of glycine through its pyridoxal phosphate cofactor; CO(2) is released and the remaining methylamine moiety is then transferred to the lipoamide cofactor of the H protein. This is Probable glycine dehydrogenase (decarboxylating) subunit 1 from Coprothermobacter proteolyticus (strain ATCC 35245 / DSM 5265 / OCM 4 / BT).